The following is a 776-amino-acid chain: MRQNYDDRKIVKQYREIARQIVKKEGLYKNMDQAELCEQTNFWREKFKTKPMTDRDKINIFALAREAASRIIGLDAVVVQLIGALVLGDGKVAEMKTGEGKTLMSLFVMFIEVMRGNRVHLVTANEYLARRDREEIGQVLEYLGVSVALNESGLDIAQKKAIYTADVIYGTASEFGFDYLRDNMVRQKEDKVQSGLDFVLIDEADSILIDEARTPLLISDRKEEDLSLYHKANKLVKKMMKDDYEMEEHKRFVWLNDAGIEKAQKFWGVESLYSAEAQSELRITMLLMRAHFLMHKDKDYVVLDDEVLIIDPHTGRALPGRRFNDGLHQAIEAKEGVEVKEESRTLATITIQNYFRMYKKISGMTGTAKTEEEEFRQIYNMDVVVIPTNLRVNREDMQDDIFYTKKEKGRAIVYEVSWRYEKGQPTLIGTSSIKSNEWISGLLDAAGIPHQVLNAKNHAQEAEIIAKAGKRGMVTLATNMAGRGTDIKLDPDVHKLGGLAVIGTERHESRRIDLQLMGRSGRRGDPGFSKFMISLEDDLLEQFESKSWEKLSAKLKRKAPRDGKPVNSRKIHAVVVDAQKRLEGANYDIRKDLLSYDEVIDLQRKMVYKERDLLLERNKLGVSSEKILREVAEYSFIHPSDIPEEELEIYYSRQKELLGGTKFPISFDQVTLMEPREVVEEIVSWHKKERNKFPAETIAAIEREVYLNLMDQMWVMHLDAMVQLREGIHLRAYGQQDPLVMYQKEGAQLFEKFQADYHFYFAHALLELDPDGLIQG.

Residues Q80, 98–102 (GEGKT), and D486 contribute to the ATP site.

The protein belongs to the SecA family. In terms of assembly, monomer and homodimer. Part of the essential Sec protein translocation apparatus which comprises SecA, SecYEG and auxiliary proteins SecDF. Other proteins may also be involved.

It is found in the cell membrane. The protein localises to the cytoplasm. It catalyses the reaction ATP + H2O + cellular proteinSide 1 = ADP + phosphate + cellular proteinSide 2.. Its function is as follows. Part of the Sec protein translocase complex. Interacts with the SecYEG preprotein conducting channel. Has a central role in coupling the hydrolysis of ATP to the transfer of proteins into and across the cell membrane, serving as an ATP-driven molecular motor driving the stepwise translocation of polypeptide chains across the membrane. The polypeptide is Protein translocase subunit SecA 2 (Listeria monocytogenes serotype 1/2a (strain 10403S)).